We begin with the raw amino-acid sequence, 273 residues long: Putative phosphoenolpyruvate synthase regulatory protein (273 aa).

Residue Ala153–Thr160 participates in ADP binding.

Belongs to the pyruvate, phosphate/water dikinase regulatory protein family. PSRP subfamily.

The catalysed reaction is [pyruvate, water dikinase] + ADP = [pyruvate, water dikinase]-phosphate + AMP + H(+). It catalyses the reaction [pyruvate, water dikinase]-phosphate + phosphate + H(+) = [pyruvate, water dikinase] + diphosphate. Its function is as follows. Bifunctional serine/threonine kinase and phosphorylase involved in the regulation of the phosphoenolpyruvate synthase (PEPS) by catalyzing its phosphorylation/dephosphorylation. The polypeptide is Putative phosphoenolpyruvate synthase regulatory protein (Xylella fastidiosa (strain M12)).